A 93-amino-acid chain; its full sequence is YcgL domain-containing protein Shal_1837 (93 aa).

Residues 1–85 (MICAVYKSRR…PVVNLLEQHK (85 aa)) form the YcgL domain.

The polypeptide is YcgL domain-containing protein Shal_1837 (Shewanella halifaxensis (strain HAW-EB4)).